A 174-amino-acid polypeptide reads, in one-letter code: NADH-quinone oxidoreductase subunit B (174 aa).

Residues Cys-53, Cys-54, Cys-118, and Cys-148 each coordinate [4Fe-4S] cluster.

The protein belongs to the complex I 20 kDa subunit family. In terms of assembly, NDH-1 is composed of 14 different subunits. Subunits NuoB, C, D, E, F, and G constitute the peripheral sector of the complex. [4Fe-4S] cluster is required as a cofactor.

It localises to the cell inner membrane. It catalyses the reaction a quinone + NADH + 5 H(+)(in) = a quinol + NAD(+) + 4 H(+)(out). In terms of biological role, NDH-1 shuttles electrons from NADH, via FMN and iron-sulfur (Fe-S) centers, to quinones in the respiratory chain. Couples the redox reaction to proton translocation (for every two electrons transferred, four hydrogen ions are translocated across the cytoplasmic membrane), and thus conserves the redox energy in a proton gradient. The protein is NADH-quinone oxidoreductase subunit B of Ruegeria sp. (strain TM1040) (Silicibacter sp.).